The primary structure comprises 252 residues: uncharacterized protein (252 aa).

The chain crosses the membrane as a helical span at residues 80–100 (LSVLVIGSTMFTHAGVLPVLA).

The protein resides in the host membrane. The protein localises to the virion. This is an uncharacterized protein from Acanthamoeba polyphaga mimivirus (APMV).